Here is a 135-residue protein sequence, read N- to C-terminus: Regulator of ribonuclease activity B (135 aa).

The interval 114–135 (WGTYFESDEDDEEDESEDKPEA) is disordered. Residues 119 to 135 (ESDEDDEEDESEDKPEA) are compositionally biased toward acidic residues.

Belongs to the RraB family. As to quaternary structure, interacts with the C-terminal region of Rne.

The protein localises to the cytoplasm. Functionally, globally modulates RNA abundance by binding to RNase E (Rne) and regulating its endonucleolytic activity. Can modulate Rne action in a substrate-dependent manner by altering the composition of the degradosome. The polypeptide is Regulator of ribonuclease activity B (Photobacterium profundum (strain SS9)).